The chain runs to 435 residues: Asparagine--tRNA ligase (435 aa).

This sequence belongs to the class-II aminoacyl-tRNA synthetase family. As to quaternary structure, homodimer.

It is found in the cytoplasm. It catalyses the reaction tRNA(Asn) + L-asparagine + ATP = L-asparaginyl-tRNA(Asn) + AMP + diphosphate + H(+). The sequence is that of Asparagine--tRNA ligase from Leptospira interrogans serogroup Icterohaemorrhagiae serovar copenhageni (strain Fiocruz L1-130).